Here is a 353-residue protein sequence, read N- to C-terminus: DNA integrity scanning protein DisA (353 aa).

In terms of domain architecture, DAC spans 6-144 (DKELMNILKI…GGIKYVLRDS (139 aa)). Residues Gly-73, Leu-91, and 104–108 (TRHRT) each bind ATP.

The protein belongs to the DisA family. In terms of assembly, homooctamer. Mg(2+) is required as a cofactor.

The catalysed reaction is 2 ATP = 3',3'-c-di-AMP + 2 diphosphate. Participates in a DNA-damage check-point that is active prior to asymmetric division when DNA is damaged. DisA forms globular foci that rapidly scan along the chromosomes during sporulation, searching for lesions. When a lesion is present, DisA pauses at the lesion site. This triggers a cellular response that culminates in a temporary block in sporulation initiation. Functionally, also has diadenylate cyclase activity, catalyzing the condensation of 2 ATP molecules into cyclic di-AMP (c-di-AMP). c-di-AMP acts as a signaling molecule that couples DNA integrity with progression of sporulation. The rise in c-di-AMP level generated by DisA while scanning the chromosome, operates as a positive signal that advances sporulation; upon encountering a lesion, the DisA focus arrests at the damaged site and halts c-di-AMP synthesis. The chain is DNA integrity scanning protein DisA from Clostridium botulinum (strain Okra / Type B1).